The following is a 316-amino-acid chain: tRNA pseudouridine synthase B (316 aa).

The active-site Nucleophile is the aspartate 47.

The protein belongs to the pseudouridine synthase TruB family. Type 1 subfamily.

The catalysed reaction is uridine(55) in tRNA = pseudouridine(55) in tRNA. In terms of biological role, responsible for synthesis of pseudouridine from uracil-55 in the psi GC loop of transfer RNAs. The protein is tRNA pseudouridine synthase B of Photobacterium profundum (strain SS9).